The primary structure comprises 73 residues: UPF0499 protein CHGG_06021 (73 aa).

The N-terminal stretch at 1–20 (MKSSIHVVLFFLLSLVASMA) is a signal peptide. 3 disulfide bridges follow: cysteine 41–cysteine 55, cysteine 48–cysteine 60, and cysteine 54–cysteine 69.

It belongs to the UPF0499 family.

The protein resides in the secreted. The chain is UPF0499 protein CHGG_06021 from Chaetomium globosum (strain ATCC 6205 / CBS 148.51 / DSM 1962 / NBRC 6347 / NRRL 1970) (Soil fungus).